The chain runs to 207 residues: Probable GTP-binding protein EngB (207 aa).

The EngB-type G domain maps to 25 to 202 (DVPEIAFVGR…ATLLWQWAHP (178 aa)). Residues 33–40 (GRSNAGKS), 60–64 (GRTQH), 82–85 (DLPG), 152–155 (TKAD), and 181–183 (FSA) each bind GTP. Mg(2+) is bound by residues serine 40 and threonine 62.

Belongs to the TRAFAC class TrmE-Era-EngA-EngB-Septin-like GTPase superfamily. EngB GTPase family. Requires Mg(2+) as cofactor.

Necessary for normal cell division and for the maintenance of normal septation. The chain is Probable GTP-binding protein EngB from Albidiferax ferrireducens (strain ATCC BAA-621 / DSM 15236 / T118) (Rhodoferax ferrireducens).